Here is a 79-residue protein sequence, read N- to C-terminus: Sec-independent protein translocase protein TatA (79 aa).

The helical transmembrane segment at 1 to 21 (MGSFSIWHWLIVLAIVVLVFG) threads the bilayer. The interval 43-79 (VKDGSTSTDTPAAAPGQVAGQTAADKTTIDVEAKQKG) is disordered. Residues 69–79 (TTIDVEAKQKG) are compositionally biased toward basic and acidic residues.

This sequence belongs to the TatA/E family. As to quaternary structure, the Tat system comprises two distinct complexes: a TatABC complex, containing multiple copies of TatA, TatB and TatC subunits, and a separate TatA complex, containing only TatA subunits. Substrates initially bind to the TatABC complex, which probably triggers association of the separate TatA complex to form the active translocon.

It localises to the cell inner membrane. Part of the twin-arginine translocation (Tat) system that transports large folded proteins containing a characteristic twin-arginine motif in their signal peptide across membranes. TatA could form the protein-conducting channel of the Tat system. In Delftia acidovorans (strain DSM 14801 / SPH-1), this protein is Sec-independent protein translocase protein TatA.